Consider the following 138-residue polypeptide: MEQTFLMVKPDGVERGLIGEIIARIERKGFVIREMKMMQVTEELAQAHYAEHAEKPFFGELVTFLTSGPVVALRVEGEDVVTVSRMMIGKTKPTEALPGTIRGDFANTMSENVIHGSDSVESAERELGLWFQGQPLNV.

6 residues coordinate ATP: Lys-9, Phe-57, Arg-85, Thr-91, Arg-102, and Asn-112. Residue His-115 is the Pros-phosphohistidine intermediate of the active site.

Belongs to the NDK family. As to quaternary structure, homotetramer. The cofactor is Mg(2+).

It localises to the cytoplasm. The catalysed reaction is a 2'-deoxyribonucleoside 5'-diphosphate + ATP = a 2'-deoxyribonucleoside 5'-triphosphate + ADP. It carries out the reaction a ribonucleoside 5'-diphosphate + ATP = a ribonucleoside 5'-triphosphate + ADP. In terms of biological role, major role in the synthesis of nucleoside triphosphates other than ATP. The ATP gamma phosphate is transferred to the NDP beta phosphate via a ping-pong mechanism, using a phosphorylated active-site intermediate. The protein is Nucleoside diphosphate kinase of Exiguobacterium sibiricum (strain DSM 17290 / CCUG 55495 / CIP 109462 / JCM 13490 / 255-15).